A 459-amino-acid polypeptide reads, in one-letter code: Bifunctional protein GlmU (459 aa).

Positions 1–230 are pyrophosphorylase; the sequence is MVKRYAVILA…FDETIGINDR (230 aa). UDP-N-acetyl-alpha-D-glucosamine contacts are provided by residues 9–12, K23, Q73, and 78–79; these read LAAG and GT. D103 contributes to the Mg(2+) binding site. UDP-N-acetyl-alpha-D-glucosamine contacts are provided by G140, E155, N170, and N228. Position 228 (N228) interacts with Mg(2+). A linker region spans residues 231-251; that stretch reads IALAEAERIMRDRICRQHMKN. An N-acetyltransferase region spans residues 252–459; sequence GVTIIDPACT…VDRLRGKKKS (208 aa). Residues R333 and K351 each coordinate UDP-N-acetyl-alpha-D-glucosamine. H363 acts as the Proton acceptor in catalysis. UDP-N-acetyl-alpha-D-glucosamine-binding residues include Y366 and N377. Acetyl-CoA-binding positions include 386 to 387, A423, and R440; that span reads NY.

In the N-terminal section; belongs to the N-acetylglucosamine-1-phosphate uridyltransferase family. The protein in the C-terminal section; belongs to the transferase hexapeptide repeat family. In terms of assembly, homotrimer. Mg(2+) is required as a cofactor.

The protein localises to the cytoplasm. It carries out the reaction alpha-D-glucosamine 1-phosphate + acetyl-CoA = N-acetyl-alpha-D-glucosamine 1-phosphate + CoA + H(+). The enzyme catalyses N-acetyl-alpha-D-glucosamine 1-phosphate + UTP + H(+) = UDP-N-acetyl-alpha-D-glucosamine + diphosphate. It functions in the pathway nucleotide-sugar biosynthesis; UDP-N-acetyl-alpha-D-glucosamine biosynthesis; N-acetyl-alpha-D-glucosamine 1-phosphate from alpha-D-glucosamine 6-phosphate (route II): step 2/2. Its pathway is nucleotide-sugar biosynthesis; UDP-N-acetyl-alpha-D-glucosamine biosynthesis; UDP-N-acetyl-alpha-D-glucosamine from N-acetyl-alpha-D-glucosamine 1-phosphate: step 1/1. It participates in bacterial outer membrane biogenesis; LPS lipid A biosynthesis. In terms of biological role, catalyzes the last two sequential reactions in the de novo biosynthetic pathway for UDP-N-acetylglucosamine (UDP-GlcNAc). The C-terminal domain catalyzes the transfer of acetyl group from acetyl coenzyme A to glucosamine-1-phosphate (GlcN-1-P) to produce N-acetylglucosamine-1-phosphate (GlcNAc-1-P), which is converted into UDP-GlcNAc by the transfer of uridine 5-monophosphate (from uridine 5-triphosphate), a reaction catalyzed by the N-terminal domain. This Geobacillus thermodenitrificans (strain NG80-2) protein is Bifunctional protein GlmU.